The primary structure comprises 116 residues: Large ribosomal subunit protein uL23 (116 aa).

It belongs to the universal ribosomal protein uL23 family. As to quaternary structure, part of the 50S ribosomal subunit. Contacts protein L29, and trigger factor when it is bound to the ribosome.

In terms of biological role, one of the early assembly proteins it binds 23S rRNA. One of the proteins that surrounds the polypeptide exit tunnel on the outside of the ribosome. Forms the main docking site for trigger factor binding to the ribosome. The sequence is that of Large ribosomal subunit protein uL23 from Psychrobacter arcticus (strain DSM 17307 / VKM B-2377 / 273-4).